A 246-amino-acid polypeptide reads, in one-letter code: uncharacterized protein (246 aa).

It belongs to the IIV-6 170L family.

This is an uncharacterized protein from Acheta domesticus (House cricket).